An 82-amino-acid chain; its full sequence is Opistoporin-1 (82 aa).

The first 22 residues, 1–22 (MNRKLLFVTLMVTMLVMQPSEG), serve as a signal peptide directing secretion. Positions 67–82 (EAGQMPFDEFMDILYE) are excised as a propeptide.

As to expression, expressed by the venom gland.

It is found in the secreted. Its subcellular location is the target cell membrane. Functionally, at high concentrations, acts as a pore former in cellular membranes and causes the leakage of the cells. At submicromolar concentrations, degranulates granulocytes and has a weak hemolytic activity against human erythrocytes. Also strongly inhibits the production of superoxide anions. Has a strong antibacterial activity against Gram-negative bacteria but is less active against Gram-positive bacteria. Also has antifungal activity. This is Opistoporin-1 from Opistophthalmus carinatus (African yellow leg scorpion).